Consider the following 144-residue polypeptide: Large ribosomal subunit protein uL15 (144 aa).

Residues 1–59 (MHLNTLAPAPGAKKSSKRVGRGMGSGLGKTGGRGHKGQKSRSGGSVKPGFEGGQMPIQR) are disordered. The segment covering 21-31 (RGMGSGLGKTG) has biased composition (gly residues).

It belongs to the universal ribosomal protein uL15 family. In terms of assembly, part of the 50S ribosomal subunit.

In terms of biological role, binds to the 23S rRNA. This is Large ribosomal subunit protein uL15 from Pseudoalteromonas atlantica (strain T6c / ATCC BAA-1087).